Consider the following 459-residue polypeptide: MNRLPSSASALAYSAHALNLIEKRTLDHEEMKALNREVIEYFKEHVNPGFLEYRKSVTAGGDYGAVEWQAGGLNTLVDTQGQEFIDCLGGFGIFNVGHRNPVVVSAVQNQLAKQPLHSQELLDPLRAMLAKTLAALTPGKLKYSFFCNSGTESVEAALKLAKAYQSPRGKFTFIATSGAFHGKSLGALSATAKSTFRKPFMPLLPGFRHVPFGNIEAMRTALSECKKTGDDVAAVILEPIQGEGGVILPPPGYLTAVRKLCDEFGALMILDEVQTGMGRTGKMFACEHENVQPDILCLAKALGGGVMPIGATIATEEVFSVLFDNPFLHTTTFGGNPLACAAALATINVLLEQNLPAQAEQKGDMLLDGFRQLAREYPDLVQEARGKGMLMAIEFVDNEIGYNFASEMFRQRVLVAGTLNNAKTIRIEPPLTLTIEQCEQVIKAARKALAAMRVSVEEA.

Residues 150–151 (GT) and Gln-274 contribute to the pyridoxal 5'-phosphate site. Lys-300 carries the post-translational modification N6-(pyridoxal phosphate)lysine. Thr-332 serves as a coordination point for pyridoxal 5'-phosphate.

The protein belongs to the class-III pyridoxal-phosphate-dependent aminotransferase family. Putrescine aminotransferase subfamily. Pyridoxal 5'-phosphate is required as a cofactor.

The catalysed reaction is an alkane-alpha,omega-diamine + 2-oxoglutarate = an omega-aminoaldehyde + L-glutamate. It carries out the reaction putrescine + 2-oxoglutarate = 1-pyrroline + L-glutamate + H2O. It catalyses the reaction cadaverine + 2-oxoglutarate = 5-aminopentanal + L-glutamate. The protein operates within amine and polyamine degradation; putrescine degradation; 4-aminobutanal from putrescine (transaminase route): step 1/1. Functionally, catalyzes the aminotransferase reaction from putrescine to 2-oxoglutarate, leading to glutamate and 4-aminobutanal, which spontaneously cyclizes to form 1-pyrroline. This is the first step in one of two pathways for putrescine degradation, where putrescine is converted into 4-aminobutanoate (gamma-aminobutyrate or GABA) via 4-aminobutanal. Also functions as a cadaverine transaminase in a a L-lysine degradation pathway to succinate that proceeds via cadaverine, glutarate and L-2-hydroxyglutarate. The sequence is that of Putrescine aminotransferase from Escherichia coli O6:K15:H31 (strain 536 / UPEC).